The following is a 181-amino-acid chain: MKASISIDEKKDFIRWFLNKHQMKTREAMWVLNYIAGHDQIVKYVHFVDNLEGCARGLSLSAHGVESEPFLFFKGNIMTTDPEKAFHDIRLNWDEELYVELHFEEAMSSPEYALVREDNPFTAVKLADEEKEMADALIYQSVHQFSREKVLQQIDEALDTRDEAAFHKLVRILQQMDTEKE.

Belongs to the UPF0302 family.

The protein is UPF0302 protein LMOf2365_1950 of Listeria monocytogenes serotype 4b (strain F2365).